Here is a 23-residue protein sequence, read N- to C-terminus: Melittin-related peptide AK-23-1 (23 aa).

Lysine amide is present on K23.

Expressed by the skin glands.

It is found in the secreted. The polypeptide is Melittin-related peptide AK-23-1 (Rana arvalis (Moor frog)).